Reading from the N-terminus, the 198-residue chain is Suppressor of cytokine signaling 2 (198 aa).

Residues 1–29 are disordered; it reads MTLRCLEPSGNGGEGTRSQWGTAGSAEEP. Residues 1 to 75 are interaction with AREL1; that stretch reads MTLRCLEPSG…PEGTFLIRDS (75 aa). Phosphoserine is present on serine 30. The region spanning 48–156 is the SH2 domain; that stretch reads WYWGSMTVNE…TVHLYLTKPL (109 aa). The residue at position 52 (serine 52) is a Phosphoserine; by PKC. The 47-residue stretch at 151 to 197 folds into the SOCS box domain; sequence YLTKPLYTSAPSLQHLCRLTINKCTGAIWGLPLPTRLKDYLEEYKFQ. Lysine 173 is covalently cross-linked (Glycyl lysine isopeptide (Lys-Gly) (interchain with G-Cter in ubiquitin)).

In terms of assembly, substrate-recognition component of the ECS(SOCS2) complex, composed of SOCS2, CUL5, ELOB, ELOC and RNF7/RBX2. Interacts with IGF1R. Interacts with DCUN1D1. Post-translationally, ubiquitinated; mediated by AREL1 and leading to its subsequent proteasomal degradation. Ubiquitination is dependent on its phosphorylation at Ser-52, by PKC. Ubiquitination is stimulated by LPS. Phosphorylation at Ser-52 by PKC facilitates its ubiquitination and proteasomal degradation. High expression in heart, placenta, lung, kidney and prostate. Predominantly expressed in pulmonary epithelia cells, specifically type II pneumocytes.

The protein resides in the cytoplasm. The protein operates within protein modification; protein ubiquitination. Substrate-binding is prevented by the covalent inhibitor MN551 that cross-links with Cys-111. Also inhibited by a MN551 derivative, MN714, which contains a pivaloyloxymethyl that allows cell permeability. Functionally, substrate-recognition component of a cullin-5-RING E3 ubiquitin-protein ligase complex (ECS complex, also named CRL5 complex), which mediates the ubiquitination and subsequent proteasomal degradation of target proteins, such as EPOR and GHR. Specifically recognizes and binds phosphorylated proteins via its SH2 domain, promoting their ubiquitination. The ECS(SOCS2) complex acts as a key regulator of growth hormone receptor (GHR) levels by mediating ubiquitination and degradation of GHR, following GHR phosphorylation by JAK2. The ECS(SOCS2) also catalyzes ubiquitination and degradation of JAK2-phosphorylated EPOR. The chain is Suppressor of cytokine signaling 2 from Homo sapiens (Human).